The chain runs to 1017 residues: Formin-binding protein 4 (1017 aa).

Disordered stretches follow at residues 1-141 and 160-202; these read MGKK…STDI and PAAP…TSGW. The residue at position 18 (Ser18) is a Phosphoserine. The span at 40–69 shows a compositional bias: low complexity; that stretch reads DSTAAVPSQPAPSAATTTTTAVTAAAASDD. Phosphoserine is present on residues Ser116 and Ser124. Residues 130 to 141 are compositionally biased toward polar residues; the sequence is SKETNGNQSTDI. Position 172 is a phosphothreonine (Thr172). The span at 181–200 shows a compositional bias: low complexity; that stretch reads AATSTLSSSTSNGTDSTQTS. Residues 214–248 form the WW 1 domain; that stretch reads GIEMGDWQEVWDENTGCYYYWNTQTNEVTWELPQY. The residue at position 290 (Lys290) is an N6-acetyllysine. Lys301 participates in a covalent cross-link: Glycyl lysine isopeptide (Lys-Gly) (interchain with G-Cter in SUMO1). A Glycyl lysine isopeptide (Lys-Gly) (interchain with G-Cter in SUMO2) cross-link involves residue Lys335. A Glycyl lysine isopeptide (Lys-Gly) (interchain with G-Cter in SUMO1); alternate cross-link involves residue Lys348. A Glycyl lysine isopeptide (Lys-Gly) (interchain with G-Cter in SUMO2); alternate cross-link involves residue Lys348. 4 disordered regions span residues 421 to 519, 621 to 676, 706 to 792, and 899 to 994; these read LEEG…TTPK, ESQW…CKES, PLPL…IKRK, and TATI…AERN. Phosphoserine is present on residues Ser427, Ser432, Ser435, Ser438, and Ser442. Over residues 428 to 442 the composition is skewed to polar residues; the sequence is VSGSSPRSDISQPAS. Positions 449–458 are enriched in basic residues; sequence LMSKRGKWKM. Residues 461 to 474 are compositionally biased toward low complexity; the sequence is RATSPESTSRSSSK. Ser464 carries the post-translational modification Phosphoserine. The residue at position 479 (Thr479) is a Phosphothreonine. Over residues 491 to 513 the composition is skewed to basic and acidic residues; it reads NSEKIDENSDKEMEVEESPEKIK. Ser499 and Ser508 each carry phosphoserine. Residues Thr516 and Thr517 each carry the phosphothreonine modification. Residue Lys519 forms a Glycyl lysine isopeptide (Lys-Gly) (interchain with G-Cter in SUMO1); alternate linkage. Lys519 is covalently cross-linked (Glycyl lysine isopeptide (Lys-Gly) (interchain with G-Cter in SUMO2); alternate). A WW 2 domain is found at 595–629; it reads NATPKGWSCHWDRDHRRYFYVNEQSGESQWEFPDG. Positions 627–637 are enriched in acidic residues; that stretch reads PDGEEEEEESQ. Basic and acidic residues predominate over residues 640-656; that stretch reads ENRDETLAKQTLKDKTG. The span at 657-671 shows a compositional bias: low complexity; sequence TDSNSTESSETSTGS. Residues 706–732 are compositionally biased toward pro residues; that stretch reads PLPLEMPPPPPPPPESPPPPPPPPPPA. Residues 733–748 are compositionally biased toward acidic residues; it reads EDGEIQEVEMEDEGSE. Over residues 764–786 the composition is skewed to low complexity; it reads SAQTTVVTSQSSVDSTISSSSST. Pro residues predominate over residues 904 to 925; that stretch reads EPPPPPPPPPPPPPPAPKMPPP. The segment covering 929–941 has biased composition (basic residues); that stretch reads KKGRKDKAKKSKT. Acidic residues predominate over residues 957–970; sequence LDEEDNSSSSEEDR. A phosphoserine mark is found at Ser963, Ser964, and Ser965. A compositionally biased stretch (basic and acidic residues) spans 971 to 982; it reads ESTAQKRIEEWK.

In terms of assembly, binds FMN1. Interacts with the Arg/Gly-rich-flanked Pro-rich of KHDRBS1/SAM68. Arginine methylation in these regions has no effect on this binding. Highly expressed in the eye.

This chain is Formin-binding protein 4 (FNBP4), found in Homo sapiens (Human).